The primary structure comprises 353 residues: Putative glycosyltransferase TagX (353 aa).

The protein belongs to the glycosyltransferase 2 family.

This Staphylococcus aureus (strain MRSA252) protein is Putative glycosyltransferase TagX (tagX).